Here is a 490-residue protein sequence, read N- to C-terminus: Alginate production protein AlgE (490 aa).

A signal peptide spans 1-32 (MNSSRSVNPRPSFAPRALSLAIALLLGAPAFA). 2 stretches are compositionally biased toward polar residues: residues 102–115 (DTLQ…NNSR) and 343–355 (QFQQ…NRSN). 2 disordered regions span residues 102–121 (DTLQ…GREP) and 331–355 (ARGS…NRSN).

Belongs to the AlgE family.

Its subcellular location is the cell outer membrane. It functions in the pathway glycan biosynthesis; alginate biosynthesis. Functionally, has non-porin-like, channel-forming properties and probably functions as an alginate permeability pore. The sequence is that of Alginate production protein AlgE (algE) from Pseudomonas aeruginosa (strain ATCC 15692 / DSM 22644 / CIP 104116 / JCM 14847 / LMG 12228 / 1C / PRS 101 / PAO1).